The chain runs to 140 residues: NTF2-related export protein 1 (140 aa).

A2 carries the post-translational modification N-acetylalanine. Positions 16–135 constitute an NTF2 domain; it reads AAEEFVNVYY…WKIASDCFRF (120 aa).

Heterodimer with NXF1. Forms a complex with RANGAP1, RANBP2/NUP358 and NXF1. Interacts (via NTF2 domain) with NXF1. Stabilizes the NTF2 domain of NXF1 by heterodimerization. The formation of NXF1-NXT1 heterodimers is required for the NXF1-mediated nuclear mRNA export. Preferentially binds Ran-GTP. Associates with NXF2, NXF3 and NXF5. Does not bind nucleoporins (NPC) directly, its association to NPC is mediated by NXF1.

It localises to the nucleus. It is found in the nucleus speckle. The protein resides in the cytoplasm. Its function is as follows. Stimulator of protein export for NES-containing proteins. Also plays a role in the nuclear export of U1 snRNA, tRNA, and mRNA. The NXF1-NXT1 heterodimer is involved in the export of HSP70 mRNA in conjunction with ALYREF/THOC4 and THOC5. This Bos taurus (Bovine) protein is NTF2-related export protein 1 (NXT1).